A 159-amino-acid polypeptide reads, in one-letter code: NADH-quinone oxidoreductase subunit I (159 aa).

2 4Fe-4S ferredoxin-type domains span residues 51-80 and 90-119; these read RRYENGVERCIACKLCEAICPAQAIVIEAE and TRYDIDMTKCIYCGLCQEACPVDAIVEGPN. C60, C63, C66, C70, C99, C102, C105, and C109 together coordinate [4Fe-4S] cluster.

This sequence belongs to the complex I 23 kDa subunit family. In terms of assembly, NDH-1 is composed of 14 different subunits. Subunits NuoA, H, J, K, L, M, N constitute the membrane sector of the complex. [4Fe-4S] cluster is required as a cofactor.

It localises to the cell inner membrane. The catalysed reaction is a quinone + NADH + 5 H(+)(in) = a quinol + NAD(+) + 4 H(+)(out). In terms of biological role, NDH-1 shuttles electrons from NADH, via FMN and iron-sulfur (Fe-S) centers, to quinones in the respiratory chain. The immediate electron acceptor for the enzyme in this species is believed to be ubiquinone. Couples the redox reaction to proton translocation (for every two electrons transferred, four hydrogen ions are translocated across the cytoplasmic membrane), and thus conserves the redox energy in a proton gradient. The polypeptide is NADH-quinone oxidoreductase subunit I (Rickettsia canadensis (strain McKiel)).